The following is a 264-amino-acid chain: S-adenosylmethionine decarboxylase proenzyme (264 aa).

Residue Ser112 is the Schiff-base intermediate with substrate; via pyruvic acid of the active site. Residue Ser112 is modified to Pyruvic acid (Ser); by autocatalysis. Catalysis depends on His117, which acts as the Proton acceptor; for processing activity. The active-site Proton donor; for catalytic activity is Cys140.

This sequence belongs to the prokaryotic AdoMetDC family. Type 2 subfamily. In terms of assembly, heterooctamer of four alpha and four beta chains arranged as a tetramer of alpha/beta heterodimers. Pyruvate serves as cofactor. Post-translationally, is synthesized initially as an inactive proenzyme. Formation of the active enzyme involves a self-maturation process in which the active site pyruvoyl group is generated from an internal serine residue via an autocatalytic post-translational modification. Two non-identical subunits are generated from the proenzyme in this reaction, and the pyruvate is formed at the N-terminus of the alpha chain, which is derived from the carboxyl end of the proenzyme. The post-translation cleavage follows an unusual pathway, termed non-hydrolytic serinolysis, in which the side chain hydroxyl group of the serine supplies its oxygen atom to form the C-terminus of the beta chain, while the remainder of the serine residue undergoes an oxidative deamination to produce ammonia and the pyruvoyl group blocking the N-terminus of the alpha chain.

The catalysed reaction is S-adenosyl-L-methionine + H(+) = S-adenosyl 3-(methylsulfanyl)propylamine + CO2. It participates in amine and polyamine biosynthesis; S-adenosylmethioninamine biosynthesis; S-adenosylmethioninamine from S-adenosyl-L-methionine: step 1/1. Its function is as follows. Catalyzes the decarboxylation of S-adenosylmethionine to S-adenosylmethioninamine (dcAdoMet), the propylamine donor required for the synthesis of the polyamines spermine and spermidine from the diamine putrescine. The sequence is that of S-adenosylmethionine decarboxylase proenzyme from Hamiltonella defensa subsp. Acyrthosiphon pisum (strain 5AT).